Consider the following 190-residue polypeptide: UPF0301 protein Psyr_0485 (190 aa).

It belongs to the UPF0301 (AlgH) family.

This is UPF0301 protein Psyr_0485 from Pseudomonas syringae pv. syringae (strain B728a).